A 421-amino-acid polypeptide reads, in one-letter code: MANVKINNISARQILDSRGYPTIEVQITLSNNVFAKASIPSGASVGKFEAVELRDHDTNYYHGYGVTKAVNLINSEIGQKIIKLETLDQEKIDNALIEIDGTNNKSRVGANSILAISLAVAKAAASTLNIPLYQYLGGITAKILPTPLINIINGGMHADNNLDFHEFMIIPHGANSFEDAIRMSSEVFHTLKKILKQKQYNTNVGDEGGFAPNIKDNTEVFDIIIDAIEKSGYKVYKDFSLGLDVAASTFYKNEKYKFSDYQFSTHELVEYYKNIVTQYPIISLEDPIAEEDTLGWKMITKELGDKIQIVGDDLFVTNCKLIKNGIDNNMANAVLIKPNQIGTLTETLNAIRLAQKNNYKVILSHRSGETNDTTISHIAVAVNCGQIKTGSLSRSERLAKYNELLYIEKLLNTSAIYQGML.

E207 functions as the Proton donor in the catalytic mechanism. Mg(2+) is bound by residues D244, E285, and D312. Residue K337 is the Proton acceptor of the active site. Residues K337, R366, S367, and K388 each contribute to the (2R)-2-phosphoglycerate site.

It belongs to the enolase family. The cofactor is Mg(2+).

The protein localises to the cytoplasm. It is found in the secreted. It localises to the cell surface. The enzyme catalyses (2R)-2-phosphoglycerate = phosphoenolpyruvate + H2O. It participates in carbohydrate degradation; glycolysis; pyruvate from D-glyceraldehyde 3-phosphate: step 4/5. In terms of biological role, catalyzes the reversible conversion of 2-phosphoglycerate (2-PG) into phosphoenolpyruvate (PEP). It is essential for the degradation of carbohydrates via glycolysis. The sequence is that of Enolase from Ehrlichia ruminantium (strain Gardel).